The following is a 1285-amino-acid chain: DNA polymerase II large subunit (1285 aa).

A disordered region spans residues T565–P586.

It belongs to the archaeal DNA polymerase II family. In terms of assembly, heterodimer of a large subunit and a small subunit. Post-translationally, this protein undergoes a protein self splicing that involves a post-translational excision of the intervening region (intein) followed by peptide ligation.

The catalysed reaction is DNA(n) + a 2'-deoxyribonucleoside 5'-triphosphate = DNA(n+1) + diphosphate. The enzyme catalyses Exonucleolytic cleavage in the 3'- to 5'-direction to yield nucleoside 5'-phosphates.. Possesses two activities: a DNA synthesis (polymerase) and an exonucleolytic activity that degrades single-stranded DNA in the 3'- to 5'-direction. Has a template-primer preference which is characteristic of a replicative DNA polymerase. This chain is DNA polymerase II large subunit, found in Methanoculleus marisnigri (strain ATCC 35101 / DSM 1498 / JR1).